We begin with the raw amino-acid sequence, 443 residues long: Thymidine phosphorylase (443 aa).

The protein belongs to the thymidine/pyrimidine-nucleoside phosphorylase family. As to quaternary structure, homodimer.

The enzyme catalyses thymidine + phosphate = 2-deoxy-alpha-D-ribose 1-phosphate + thymine. It participates in pyrimidine metabolism; dTMP biosynthesis via salvage pathway; dTMP from thymine: step 1/2. Functionally, the enzymes which catalyze the reversible phosphorolysis of pyrimidine nucleosides are involved in the degradation of these compounds and in their utilization as carbon and energy sources, or in the rescue of pyrimidine bases for nucleotide synthesis. The polypeptide is Thymidine phosphorylase (Shewanella baltica (strain OS223)).